Reading from the N-terminus, the 301-residue chain is Mitochondrial substrate carrier family protein X (301 aa).

Over 1 to 23 (MVQQQQQQQQIKKNQVKPPLYSN) the chain is Mitochondrial intermembrane. Solcar repeat units follow at residues 18–109 (PPLY…FRTR), 117–199 (IKLW…MKHN), and 208–296 (IGLP…QKSF). A helical membrane pass occupies residues 24-44 (LIAGAIAGVIGSSVVFPLDFV). The Mitochondrial matrix segment spans residues 45–75 (KTRLQQQRVSIDGSKQYNGIIDCFKKVIKNE). The helical transmembrane segment at 76 to 97 (GGVRGLYRGLSSNLIGIIPEKA) threads the bilayer. Topologically, residues 98-122 (LKLAMNDYFRTRFQGDRSYIKLWEE) are mitochondrial intermembrane. A helical transmembrane segment spans residues 123-143 (VASGGLAGMCQVVATNPMELV). The Mitochondrial matrix portion of the chain corresponds to 144–173 (KIRMQVSGLSGKKASLKEVVSELGIKGLYK). Residues 174–194 (GTASTLLRDVPFSMIYFSIYG) traverse the membrane as a helical segment. Topologically, residues 195–207 (RMKHNLTDQETGE) are mitochondrial intermembrane. A helical membrane pass occupies residues 208–228 (IGLPKILLCGITAGSIAASVS). The Mitochondrial matrix segment spans residues 229-271 (TPFDVIKTRIQVKPGPNDPHYKGIADCFRKTIQSEGPKALFKG). Residues 272 to 292 (VLPRVCIISPLFGITLVVYEI) form a helical membrane-spanning segment. Residues 293–301 (QKSFYASTH) are Mitochondrial intermembrane-facing.

It belongs to the mitochondrial carrier (TC 2.A.29) family.

It localises to the mitochondrion inner membrane. Functionally, mitochondrial solute carriers shuttle metabolites, nucleotides, and cofactors through the mitochondrial inner membrane. This is Mitochondrial substrate carrier family protein X (mcfX) from Dictyostelium discoideum (Social amoeba).